The sequence spans 782 residues: MRQKTLDVLEFEKIKSLVANETISDLGLEKVNQMMPATNFETVVFQMEETDEIAQIYNKHRLPSLSGLSKVSAFIHRADIGGVLNVSELNLIKRLIQVQNQFKTFYNQLVEEDEGVKYPILDDKMNQLPVLTDLFHQINETCDTYDLYDNASYELQGIRSKISSTNQRIRQNLDRIVKSQANQKKLSDAIVTVRNERNVIPVKAEYRQDFNGIVHDQSASGQTLYIEPSSVVEMNNQISRLRHDEAIEKERILTQLTGYVAADKDALLVAEQVMGQLDFLIAKARYSRSVKGTKPIFKEDRTVYLPKAYHPLLNRETVVANTIEFMEDIETVIITGPNTGGKTVTLKTLGLIIVMAQSGLLIPTLDGSQLSVFKNVYCDIGDEQSIEQSLSTFSSHMTNIVEILKHADKHSLVLFDELGAGTDPSEGAALAMSILDHVRKIGSLVMATTHYPELKAYSYNREGVMNASVEFDVDTLSPTYKLLMGVPGRSNAFDISKKLGLSLNIINKAKTMIGTDEKEINEMIESLERNYKRVETQRLELDRLVKEAEQVHDDLSKQYQQFQNYEKSLIEEAKEKANQKIKAATKEADDIIKDLRQLREQKGADVKEHELIDKKKRLDDHYEAKSIKQNVQKQKYDKIVAGDEVKVLSYGQKGEVLEIVNDEEAIVQMGIIKMKLPIEDLEKKQKEKVKPTKMVTRQNRQTIKTELDLRGYRYEDALIELDQYLDQAVLSNYEQVYIIHGKGTGALQKGVQQHLKKHKSVSDFRGGMPSEGGFGVTVATLK.

336-343 contributes to the ATP binding site; the sequence is GPNTGGKT. In terms of domain architecture, Smr spans 707 to 782; that stretch reads LDLRGYRYED…GFGVTVATLK (76 aa).

Belongs to the DNA mismatch repair MutS family. MutS2 subfamily. In terms of assembly, homodimer. Binds to stalled ribosomes, contacting rRNA.

Endonuclease that is involved in the suppression of homologous recombination and thus may have a key role in the control of bacterial genetic diversity. Functionally, acts as a ribosome collision sensor, splitting the ribosome into its 2 subunits. Detects stalled/collided 70S ribosomes which it binds and splits by an ATP-hydrolysis driven conformational change. Acts upstream of the ribosome quality control system (RQC), a ribosome-associated complex that mediates the extraction of incompletely synthesized nascent chains from stalled ribosomes and their subsequent degradation. Probably generates substrates for RQC. The protein is Endonuclease MutS2 of Staphylococcus aureus (strain MSSA476).